Consider the following 514-residue polypeptide: Cilia- and flagella-associated protein 53 (514 aa).

The stretch at 207-429 forms a coiled coil; it reads EDRLAKERRE…ERINEGLKEL (223 aa).

Belongs to the CFAP53 family. In terms of assembly, microtubule inner protein component of sperm flagellar doublet microtubules. Interacts with PIERCE1 and PIERCE2; the interactions link outer dynein arms docking complex (ODA-DC) to the internal microtubule inner proteins (MIP) in cilium axoneme. Interacts with CCDC38. Interacts with CCDC42 and IFT88. Interacts with centriolar satellite proteins PIBF1/CEP90 and PCM1. Interacts with dyneins DNAIC1, DNAIC2 AND DNAH11 and with ODA-DC component ODAD4/TTC25. Expressed in trachea multiciliated cells.

The protein localises to the cytoplasm. It localises to the cytoskeleton. Its subcellular location is the cilium axoneme. It is found in the flagellum axoneme. The protein resides in the microtubule organizing center. The protein localises to the centrosome. It localises to the centriolar satellite. Its subcellular location is the spindle pole. Its function is as follows. Microtubule inner protein (MIP) part of the dynein-decorated doublet microtubules (DMTs) in cilia axoneme, which is required for motile cilia beating. Regulates motility patterns of both 9+0 and 9+2 motile cilia through differential localization and recruitment of axonemal dynein components. Required for centriolar satellite integrity and non-motile cilium assembly. Required for motile cilium formation. Through its role in beating of primary cilia, involved in the establishment of organ laterality during embryogenesis. Required for sperm flagellum biogenesis and is essential for male fertility. The chain is Cilia- and flagella-associated protein 53 (CFAP53) from Bos taurus (Bovine).